A 225-amino-acid polypeptide reads, in one-letter code: Respiratory nitrate reductase 1 gamma chain (225 aa).

Met-1 bears the N-formylmethionine mark. Residues 1–3 (MQF) are Periplasmic-facing. Residues 4–29 (LNMFFFDIYPYIAGAVFLIGSWLRYD) form a helical membrane-spanning segment. Over 30–47 (YGQYTWRAASSQMLDRKG) the chain is Cytoplasmic. A helical membrane pass occupies residues 48–70 (MNLASNLFHIGILGIFVGHFFGM). His-56 and His-66 together coordinate heme b. The Periplasmic segment spans residues 71–82 (LTPHWMYEAWLP). A helical membrane pass occupies residues 83-112 (IEVKQKMAMFAGGASGVLCLIGGVLLLKRR). The Cytoplasmic portion of the chain corresponds to 113–124 (LFSPRVRATTTG). The helical transmembrane segment at 125-148 (ADILILSLLVIQCALGLLTIPFSA) threads the bilayer. Over 149 to 182 (QHMDGSEMMKLVGWAQSVVTFHGGASQHLDGVAF) the chain is Periplasmic. A helical transmembrane segment spans residues 183–198 (IFRLHLVLGMTLFLLF). Heme b is bound by residues His-187 and His-205. Topologically, residues 199–225 (PFSRLIHIWSVPVEYLTRKYQLVRARH) are cytoplasmic.

As to quaternary structure, dimer of heterotrimers each composed of an alpha, a beta and a gamma chain. Alpha and beta are catalytic chains; gamma chains are involved in binding the enzyme complex to the cytoplasmic membrane. Heme serves as cofactor.

It is found in the cell inner membrane. The enzyme catalyses nitrate + a quinol = a quinone + nitrite + H2O. Its function is as follows. The nitrate reductase enzyme complex allows E.coli to use nitrate as an electron acceptor during anaerobic growth. The gamma chain is a membrane-embedded heme-iron unit resembling cytochrome b, which transfers electrons from quinones to the beta subunit. This Escherichia coli (strain K12) protein is Respiratory nitrate reductase 1 gamma chain (narI).